The primary structure comprises 265 residues: Type III pantothenate kinase (265 aa).

Residue Asp6 to Val13 participates in ATP binding. Gly112–Arg115 provides a ligand contact to substrate. Asp114 serves as the catalytic Proton acceptor. Residue Asp134 coordinates K(+). Residue Thr137 participates in ATP binding. Substrate is bound at residue Thr189.

The protein belongs to the type III pantothenate kinase family. As to quaternary structure, homodimer. It depends on NH4(+) as a cofactor. K(+) is required as a cofactor.

It localises to the cytoplasm. It carries out the reaction (R)-pantothenate + ATP = (R)-4'-phosphopantothenate + ADP + H(+). Its pathway is cofactor biosynthesis; coenzyme A biosynthesis; CoA from (R)-pantothenate: step 1/5. Its function is as follows. Catalyzes the phosphorylation of pantothenate (Pan), the first step in CoA biosynthesis. The polypeptide is Type III pantothenate kinase (Streptomyces griseus subsp. griseus (strain JCM 4626 / CBS 651.72 / NBRC 13350 / KCC S-0626 / ISP 5235)).